Consider the following 720-residue polypeptide: DNA ligase (720 aa).

Residues 57 to 61 (DAEYD), 106 to 107 (SL), and Glu140 contribute to the NAD(+) site. The active-site N6-AMP-lysine intermediate is Lys142. Positions 163, 200, 316, and 340 each coordinate NAD(+). Residues Cys434, Cys437, Cys458, and Cys464 each coordinate Zn(2+). The BRCT domain maps to 643-720 (AAASPVSGKT…TEDEWFELVG (78 aa)).

Belongs to the NAD-dependent DNA ligase family. LigA subfamily. It depends on Mg(2+) as a cofactor. The cofactor is Mn(2+).

It carries out the reaction NAD(+) + (deoxyribonucleotide)n-3'-hydroxyl + 5'-phospho-(deoxyribonucleotide)m = (deoxyribonucleotide)n+m + AMP + beta-nicotinamide D-nucleotide.. DNA ligase that catalyzes the formation of phosphodiester linkages between 5'-phosphoryl and 3'-hydroxyl groups in double-stranded DNA using NAD as a coenzyme and as the energy source for the reaction. It is essential for DNA replication and repair of damaged DNA. This chain is DNA ligase, found in Xanthobacter autotrophicus (strain ATCC BAA-1158 / Py2).